A 136-amino-acid polypeptide reads, in one-letter code: Ribosome-binding factor A (136 aa).

The protein belongs to the RbfA family. In terms of assembly, monomer. Binds 30S ribosomal subunits, but not 50S ribosomal subunits or 70S ribosomes.

The protein resides in the cytoplasm. In terms of biological role, one of several proteins that assist in the late maturation steps of the functional core of the 30S ribosomal subunit. Associates with free 30S ribosomal subunits (but not with 30S subunits that are part of 70S ribosomes or polysomes). Required for efficient processing of 16S rRNA. May interact with the 5'-terminal helix region of 16S rRNA. The protein is Ribosome-binding factor A of Serratia proteamaculans (strain 568).